The primary structure comprises 378 residues: Cobalt-precorrin-5B C(1)-methyltransferase (378 aa).

The protein belongs to the CbiD family.

The enzyme catalyses Co-precorrin-5B + S-adenosyl-L-methionine = Co-precorrin-6A + S-adenosyl-L-homocysteine. It participates in cofactor biosynthesis; adenosylcobalamin biosynthesis; cob(II)yrinate a,c-diamide from sirohydrochlorin (anaerobic route): step 6/10. Catalyzes the methylation of C-1 in cobalt-precorrin-5B to form cobalt-precorrin-6A. The protein is Cobalt-precorrin-5B C(1)-methyltransferase of Tolumonas auensis (strain DSM 9187 / NBRC 110442 / TA 4).